The sequence spans 593 residues: Double-stranded RNA-binding protein 2 (593 aa).

2 consecutive DRBM domains span residues 1–70 (MYKN…ELSK) and 87–155 (IYKN…ELKQ). Residues 188–197 (LNQTNGGKTP) are compositionally biased toward polar residues. 3 disordered regions span residues 188-221 (LNQTNGGKTPQQKEKQQSSNRPSSRRPSYPKSNA), 357-408 (APDF…ESNQ), and 546-593 (VNSS…KLHI). A compositionally biased stretch (low complexity) spans 205–219 (SSNRPSSRRPSYPKS). Residues 378–408 (ESSPASEQESKSHTASSSATRSPSQQLESNQ) are compositionally biased toward polar residues. Positions 572 to 586 (RTNTSDTSNAATASS) are enriched in low complexity.

Its function is as follows. Binds double-stranded RNA. The polypeptide is Double-stranded RNA-binding protein 2 (DRB2) (Oryza sativa subsp. japonica (Rice)).